We begin with the raw amino-acid sequence, 282 residues long: Small ribosomal subunit protein uS3 (282 aa).

Positions 43-111 (IRRLMSKGME…QVQLNILEVK (69 aa)) constitute a KH type-2 domain. Residues 217–282 (AQSQAAAPRA…IGKGSNGTEA (66 aa)) are disordered. Over residues 228 to 240 (RRNERGDRPDRGA) the composition is skewed to basic and acidic residues. Residues 256-269 (AVATGSAPTGTAAT) show a composition bias toward low complexity.

Belongs to the universal ribosomal protein uS3 family. In terms of assembly, part of the 30S ribosomal subunit. Forms a tight complex with proteins S10 and S14.

Binds the lower part of the 30S subunit head. Binds mRNA in the 70S ribosome, positioning it for translation. The chain is Small ribosomal subunit protein uS3 from Kineococcus radiotolerans (strain ATCC BAA-149 / DSM 14245 / SRS30216).